The primary structure comprises 201 residues: Envelope glycoprotein (201 aa).

The Extracellular segment spans residues 1–148; that stretch reads RRARYKKEPV…FNKSPWFTTL (148 aa). Positions 10-30 are fusion peptide; sequence VSLTLALLLGGLTMGGIAAGV. Residues 39–75 are a coiled coil; the sequence is ATQQFQQLQAAIHDDLKEVEKSITNLEKSLTSLSEVV. An immunosuppression region spans residues 76–92; the sequence is LQNRRGLDLLFLKEGGL. Positions 93–101 match the CX6CC motif; that stretch reads CAALKEECC. The helical transmembrane segment at 149-169 threads the bilayer; sequence ISTVMGPLIILLLILLFGPCI. Cys-168 is lipidated: S-palmitoyl cysteine; by host. Over 170–201 the chain is Cytoplasmic; that stretch reads LNRLVQFIKDRISVVQALVLTQQYHQLKTIGD. Positions 193 to 196 match the YXXL motif; contains endocytosis signal motif; it reads YHQL.

The mature envelope protein (Env) consists of a trimer of SU-TM heterodimers attached by a labile interchain disulfide bond. In terms of processing, specific enzymatic cleavages in vivo yield mature proteins. Envelope glycoproteins are synthesized as an inactive precursor that is N-glycosylated and processed likely by host cell furin or by a furin-like protease in the Golgi to yield the mature SU and TM proteins. The cleavage site between SU and TM requires the minimal sequence [KR]-X-[KR]-R. The R-peptide is released from the C-terminus of the cytoplasmic tail of the TM protein upon particle formation as a result of proteolytic cleavage by the viral protease. Cleavage of this peptide is required for TM to become fusogenic. Post-translationally, the transmembrane protein is palmitoylated. The R-peptide is palmitoylated.

The protein resides in the virion membrane. Its subcellular location is the host cell membrane. In terms of biological role, the surface protein (SU) attaches the virus to the host cell by binding to its receptor. This interaction triggers the refolding of the transmembrane protein (TM) and is thought to activate its fusogenic potential by unmasking its fusion peptide. Fusion occurs at the host cell plasma membrane. Its function is as follows. The transmembrane protein (TM) acts as a class I viral fusion protein. Under the current model, the protein has at least 3 conformational states: pre-fusion native state, pre-hairpin intermediate state, and post-fusion hairpin state. During viral and target cell membrane fusion, the coiled coil regions (heptad repeats) assume a trimer-of-hairpins structure, positioning the fusion peptide in close proximity to the C-terminal region of the ectodomain. The formation of this structure appears to drive apposition and subsequent fusion of viral and target cell membranes. Membranes fusion leads to delivery of the nucleocapsid into the cytoplasm. The polypeptide is Envelope glycoprotein (env) (Mus musculus (Mouse)).